Consider the following 567-residue polypeptide: Ran-binding protein 3 (567 aa).

Residues 1 to 10 (MADLANEEKP) are compositionally biased toward basic and acidic residues. Disordered stretches follow at residues 1-263 (MADL…FVFG), 332-373 (LSPP…AESA), and 515-567 (VEQE…TGST). Ala-2 carries the post-translational modification N-acetylalanine. N6-acetyllysine occurs at positions 9 and 21. Residues 39 to 49 (EEPRGEAEAPH) are compositionally biased toward basic and acidic residues. Thr-75 bears the Phosphothreonine mark. Residues 75 to 89 (TPPPPAPEAQLPPFP) are compositionally biased toward pro residues. Ser-100, Ser-101, and Ser-108 each carry phosphoserine. The Nuclear localization signal signature appears at 117–125 (PPVKRERTS). Thr-124 is modified (phosphothreonine). Composition is skewed to polar residues over residues 125 to 134 (SSLTQFPPSQ) and 184 to 197 (ALSQ…TNGV). Ser-126 is modified (phosphoserine). Phosphoserine is present on residues Ser-219, Ser-333, Ser-353, Ser-355, and Ser-372. The segment covering 347 to 362 (ENAAAESGSESSSQEA) has biased composition (low complexity). A RanBD1 domain is found at 378 to 518 (KATARKCLLE…LALRSRVEQE (141 aa)). Acidic residues predominate over residues 534–544 (NEEDDSDDDDV). Residue Ser-539 is modified to Phosphoserine. Positions 549–567 (GATAAGAGDEGDGQTTGST) are enriched in low complexity.

Interacts with CHC1 in a Ran-stimulated manner. Interacts with XPO1. Interacts (via its C-terminal R domain) with SMAD2 (dephosphorylated form via its MH1 and MH2 domains); the interaction results in the nuclear export of SMAD2 and termination of the TGF-beta signaling. Interacts (via its C-terminal R domain) with SMAD3 (dephosphorylated form via its MH1 domain); the interaction results in the nuclear export of SMAD3 and termination of the TGF-beta signaling. In terms of processing, phosphorylation at Ser-126 promotes its import into the nucleus. As to expression, widely expressed with high levels in testis and heart.

It localises to the cytoplasm. Its subcellular location is the nucleus. Functionally, acts as a cofactor for XPO1/CRM1-mediated nuclear export, perhaps as export complex scaffolding protein. Bound to XPO1/CRM1, stabilizes the XPO1/CRM1-cargo interaction. In the absence of Ran-bound GTP prevents binding of XPO1/CRM1 to the nuclear pore complex. Binds to CHC1/RCC1 and increases the guanine nucleotide exchange activity of CHC1/RCC1. Recruits XPO1/CRM1 to CHC1/RCC1 in a Ran-dependent manner. Negative regulator of TGF-beta signaling through interaction with the R-SMAD proteins, SMAD2 and SMAD3, and mediating their nuclear export. This is Ran-binding protein 3 (RANBP3) from Homo sapiens (Human).